The chain runs to 598 residues: Elongation factor 4 (598 aa).

Residues 4–186 (SHIRNFSIIA…VIVNKIPPPE (183 aa)) form the tr-type G domain. Residues 16–21 (DHGKST) and 133–136 (NKID) each bind GTP.

The protein belongs to the TRAFAC class translation factor GTPase superfamily. Classic translation factor GTPase family. LepA subfamily.

The protein localises to the cell inner membrane. It catalyses the reaction GTP + H2O = GDP + phosphate + H(+). Required for accurate and efficient protein synthesis under certain stress conditions. May act as a fidelity factor of the translation reaction, by catalyzing a one-codon backward translocation of tRNAs on improperly translocated ribosomes. Back-translocation proceeds from a post-translocation (POST) complex to a pre-translocation (PRE) complex, thus giving elongation factor G a second chance to translocate the tRNAs correctly. Binds to ribosomes in a GTP-dependent manner. This chain is Elongation factor 4, found in Alteromonas mediterranea (strain DSM 17117 / CIP 110805 / LMG 28347 / Deep ecotype).